A 285-amino-acid polypeptide reads, in one-letter code: uncharacterized protein (285 aa).

In terms of domain architecture, HTH araC/xylS-type spans 184 to 282 (HSICNWVQDN…GLTPGEYSAR (99 aa)). 2 consecutive DNA-binding regions (H-T-H motif) follow at residues 201–222 (ESVAQFFNITPNHLSKLFAQHG) and 249–272 (IHEVAQRCGFPDSDYFCRVFRRQF).

This is an uncharacterized protein from Escherichia coli (strain K12).